A 475-amino-acid chain; its full sequence is Aspartyl/glutamyl-tRNA(Asn/Gln) amidotransferase subunit B (475 aa).

It belongs to the GatB/GatE family. GatB subfamily. In terms of assembly, heterotrimer of A, B and C subunits.

It carries out the reaction L-glutamyl-tRNA(Gln) + L-glutamine + ATP + H2O = L-glutaminyl-tRNA(Gln) + L-glutamate + ADP + phosphate + H(+). The enzyme catalyses L-aspartyl-tRNA(Asn) + L-glutamine + ATP + H2O = L-asparaginyl-tRNA(Asn) + L-glutamate + ADP + phosphate + 2 H(+). Its function is as follows. Allows the formation of correctly charged Asn-tRNA(Asn) or Gln-tRNA(Gln) through the transamidation of misacylated Asp-tRNA(Asn) or Glu-tRNA(Gln) in organisms which lack either or both of asparaginyl-tRNA or glutaminyl-tRNA synthetases. The reaction takes place in the presence of glutamine and ATP through an activated phospho-Asp-tRNA(Asn) or phospho-Glu-tRNA(Gln). This Clostridium novyi (strain NT) protein is Aspartyl/glutamyl-tRNA(Asn/Gln) amidotransferase subunit B.